The primary structure comprises 253 residues: Phycoerythrobilin:ferredoxin oxidoreductase (253 aa).

The protein belongs to the HY2 family.

It carries out the reaction (3Z)-phycoerythrobilin + oxidized 2[4Fe-4S]-[ferredoxin] = 15,16-dihydrobiliverdin + reduced 2[4Fe-4S]-[ferredoxin] + 2 H(+). Catalyzes the two-electron reduction of the C2 and C3(1) diene system of 15,16-dihydrobiliverdin. This chain is Phycoerythrobilin:ferredoxin oxidoreductase, found in Prochlorococcus marinus (strain MIT 9301).